The sequence spans 581 residues: Proline--tRNA ligase (581 aa).

This sequence belongs to the class-II aminoacyl-tRNA synthetase family. ProS type 1 subfamily. As to quaternary structure, homodimer.

The protein resides in the cytoplasm. It carries out the reaction tRNA(Pro) + L-proline + ATP = L-prolyl-tRNA(Pro) + AMP + diphosphate. Its function is as follows. Catalyzes the attachment of proline to tRNA(Pro) in a two-step reaction: proline is first activated by ATP to form Pro-AMP and then transferred to the acceptor end of tRNA(Pro). As ProRS can inadvertently accommodate and process non-cognate amino acids such as alanine and cysteine, to avoid such errors it has two additional distinct editing activities against alanine. One activity is designated as 'pretransfer' editing and involves the tRNA(Pro)-independent hydrolysis of activated Ala-AMP. The other activity is designated 'posttransfer' editing and involves deacylation of mischarged Ala-tRNA(Pro). The misacylated Cys-tRNA(Pro) is not edited by ProRS. This Polaromonas naphthalenivorans (strain CJ2) protein is Proline--tRNA ligase.